A 537-amino-acid chain; its full sequence is MSRTGMPVINFINFNQTGTCISMGTSEGLKIFNCDPFGRFYSDEDGGCGIVEMLFSTSLLAVVGIGDNPSMSPRRLRILNTKRHSVICEVTFPTTILAVKMNRSRLVVLLQEQIYIYDINSMRLLYTIETSSNPRGLISMSPSLENNYLAYPSPPKVINSGIKSNANTNNIGISARSSIAEGGSEYLDKGTEPLTDSSKAGADLNSVKASTETTISPGKEHSAGSGLNATSSSGTVKNGDVIFFNLQTLQPTMVIEAHKGEIAALALSKDGTLLATASEKGTIIRVFSVETCTKVYQFRRGTYPTRIYSLNFSDDNEFLAASSSNKTVHIFKLGKPNAENSSAAATNSDDDEGEADSDDGADDDGVGDSDDTRSTVSIESFDNGSHQTREPIVDSSRKTVGRMIRKSSQNLSRKAAKALGSYFPKKVTSILEPRRHFASLKIPIESGSNLKTICTIGEPLTLDISDYPELFSGSRTMAQSASISANSSDSSLTRNSNFVKMIPIRVVSSEGYMYNYVLDPERGGDCLLLSQYPLLMD.

A disordered region spans residues 184 to 230 (SEYLDKGTEPLTDSSKAGADLNSVKASTETTISPGKEHSAGSGLNAT). The segment covering 207 to 216 (VKASTETTIS) has biased composition (polar residues). WD repeat units lie at residues 257–297 (AHKG…KVYQ) and 302–341 (TYPT…AENS). The short motif at 298–302 (FRRGT) is the L/FRRG motif element. Residues 338–347 (AENSSAAATN) show a composition bias toward low complexity. The tract at residues 338–411 (AENSSAAATN…RMIRKSSQNL (74 aa)) is disordered. Positions 348 to 369 (SDDDEGEADSDDGADDDGVGDS) are enriched in acidic residues. The segment covering 374–386 (STVSIESFDNGSH) has biased composition (polar residues). Basic and acidic residues predominate over residues 387–397 (QTREPIVDSSR).

The protein belongs to the WD repeat PROPPIN family. In terms of assembly, component of the PI(3,5)P2 regulatory complex.

It is found in the preautophagosomal structure membrane. It localises to the vacuole membrane. Its subcellular location is the endosome membrane. In terms of biological role, the PI(3,5)P2 regulatory complex regulates both the synthesis and turnover of phosphatidylinositol 3,5-bisphosphate (PtdIns(3,5)P2). Necessary for proper vacuole morphology. Plays an important role in osmotically-induced vacuole fragmentation. Required for cytoplasm to vacuole transport (Cvt) vesicle formation, pexophagy and starvation-induced autophagy. Involved in correct ATG9 trafficking to the pre-autophagosomal structure. Might also be involved in premeiotic DNA replication. This is Autophagy-related protein 18 (ATG18) from Eremothecium gossypii (strain ATCC 10895 / CBS 109.51 / FGSC 9923 / NRRL Y-1056) (Yeast).